The following is a 482-amino-acid chain: Histone deacetylase 1 (482 aa).

Residues 9–321 are histone deacetylase; the sequence is RKVCYYYDGD…WTYETAVALD (313 aa). Residues glycine 27 and lysine 31 each coordinate 1D-myo-inositol 1,4,5,6-tetrakisphosphate. Residue lysine 74 is modified to N6-acetyllysine; alternate. Lysine 74 is covalently cross-linked (Glycyl lysine isopeptide (Lys-Gly) (interchain with G-Cter in SUMO2); alternate). Histidine 141 is an active-site residue. Residues aspartate 176 and histidine 178 each coordinate Zn(2+). An N6-acetyllysine modification is found at lysine 220. S-nitrosocysteine is present on cysteine 261. Aspartate 264 serves as a coordination point for Zn(2+). Arginine 270 serves as a coordination point for 1D-myo-inositol 1,4,5,6-tetrakisphosphate. Cysteine 273 carries the post-translational modification S-nitrosocysteine. Residues 390–400 show a composition bias toward acidic residues; sequence PEESGDEDEDD. The tract at residues 390-482 is disordered; sequence PEESGDEDED…KGVKEEVKLA (93 aa). A phosphoserine mark is found at serine 393, serine 406, and serine 409. Residues 401–416 are compositionally biased toward basic and acidic residues; sequence PDKRISICSSDKRIAC. The segment covering 417-427 has biased composition (acidic residues); it reads EEEFSDSEEEG. Serine 421 and serine 423 each carry phosphoserine; by CK2. An N6-methylated lysine; by EHMT2 modification is found at lysine 432. A Glycyl lysine isopeptide (Lys-Gly) (interchain with G-Cter in SUMO2) cross-link involves residue lysine 438. A compositionally biased stretch (basic and acidic residues) spans 443-482; it reads VKTEDEKEKDPEEKKEVTEEEKTKEEKPEAKGVKEEVKLA. Lysine 444 participates in a covalent cross-link: Glycyl lysine isopeptide (Lys-Gly) (interchain with G-Cter in SUMO2); alternate. Lysine 444 is covalently cross-linked (Glycyl lysine isopeptide (Lys-Gly) (interchain with G-Cter in SUMO); alternate). Residues lysine 456, lysine 457, and lysine 473 each participate in a glycyl lysine isopeptide (Lys-Gly) (interchain with G-Cter in SUMO2) cross-link. Lysine 476 is covalently cross-linked (Glycyl lysine isopeptide (Lys-Gly) (interchain with G-Cter in SUMO2); alternate). Lysine 476 participates in a covalent cross-link: Glycyl lysine isopeptide (Lys-Gly) (interchain with G-Cter in SUMO); alternate. Lysine 480 is covalently cross-linked (Glycyl lysine isopeptide (Lys-Gly) (interchain with G-Cter in SUMO2)).

The protein belongs to the histone deacetylase family. HD type 1 subfamily. As to quaternary structure, part of the core histone deacetylase (HDAC) complex composed of HDAC1, HDAC2, RBBP4 and RBBP7, the core complex associates with SIN3, SAP18 and SAP30 to form the SIN3 HDAC complex. Component of the nucleosome remodeling and deacetylase (NuRD) repressor complex, composed of core proteins MTA1, MTA2, MTA3, RBBP4, RBBP7, HDAC1, HDAC2, MBD2, MBD3, and peripherally associated proteins CDK2AP1, CDK2AP2, GATAD2A, GATAD2B, CHD3, CHD4 and CHD5. The exact stoichiometry of the NuRD complex is unknown, and some subunits such as MBD2 and MBD3, GATAD2A and GATAD2B, and CHD3, CHD4 and CHD5 define mutually exclusive NuRD complexes. Component of a BHC histone deacetylase complex that contains HDAC1, HDAC2, HMG20B/BRAF35, KDM1A, RCOR1/CoREST and PHF21A/BHC80. The BHC complex may also contain ZMYM2, ZNF217, ZMYM3, GSE1 and GTF2I. Component of a mSin3A corepressor complex that contains SIN3A, SAP130, SUDS3/SAP45, ARID4B/SAP180, HDAC1 and HDAC2. Component of the SIN3B complex, which includes SIN3B, HDAC1, PHF12 and MORF4L1. Found in a trimeric complex with APBB1 and TSHZ3; the interaction between HDAC1 and APBB1 is mediated by TSHZ3. Forms a complex comprising APPL1, RUVBL2, APPL2, CTNNB1 and HDAC2. Component of a RCOR/GFI/KDM1A/HDAC complex. Part of a complex composed of TRIM28, HDAC1, HDAC2 and EHMT2. Part of a complex containing at least CDYL, MIER1, MIER2, HDAC1 and HDAC2. The large PER complex involved in the histone deacetylation is composed of at least HDAC1, PER2, SFPQ and SIN3A. Associates with the 9-1-1 complex; interacts with HUS1. Found in a complex with DNMT3A and HDAC7. Found in a complex with YY1, SIN3A and GON4L. Identified in a histone deacetylase complex that contains DNTTIP1, HDAC1 and MIDEAS; this complex assembles into a tetramer that contains four copies of each protein chain. Found in a complex composed of at least SINHCAF, SIN3A, HDAC1, SAP30, RBBP4, OGT and TET1. Interacts with GFI1; the interaction is direct. Interacts directly with GFI1B. Interacts with TSHZ3 (via N-terminus); the interaction is direct. Interacts with APEX1; the interaction is not dependent on the acetylated status of APEX1. Interacts with BANP. Interacts with BAZ2A/TIP5. Interacts with BCL6. Interacts with BCOR. Interacts with BHLHE40/DEC1. Interacts with BRCC3; this interaction is enhanced in the presence of PWWP2B. Interacts with BRMS1. Interacts with BRMS1L. Interacts with C10orf90/FATS (via its N-terminal); the interaction prevents binding of HDAC1 to CDKN1A/p21 and facilitates the acetylation and stabilization of CDKN1A/p21. Interacts with CBFA2T3. Interacts with CCAR2. Interacts with CDK2AP1. Interacts with CHD3. Interacts with CHD4. Interacts with CHFR. Interacts with CIART. Interacts with CDKN1A/p21. Interacts with CDK5 complexed to CDK5R1 (p25). Interacts with CRY1. Interacts with DAXX. Interacts with DDIT3/CHOP. Interacts with DDX5. Interacts with DHX36; this interaction occurs in a RNA-dependent manner. Interacts with DNMT1. Interacts with DNTTIP1. Interacts with E4F1. Interacts with EP300. Interacts with ERCC6. Interacts with GATAD2A. Interacts with HCFC1. Interacts with HDAC9. Interacts with HUS1. Interacts with INSM1. Interacts with KDM4A. Interacts with KDM5A; this interaction impairs histone deacetylation. Interacts with KDM5B. Interacts with KLF1. Interacts with MBD3L2. Interacts with MIER1. Interacts with NFE4. Interacts with NR4A2/NURR1. Interacts with NR1D2 (via C-terminus). Interacts with NRIP1. Interacts with NSD2. Interacts with PACS2. Interacts with PHB2. Interacts with PPHLN1. Interacts with PRDM6. Interacts with PRDM16. Interacts with PWWP2A in a MTA1-dependent manner. Interacts with PWWP2B. Interacts with RB1. Interacts with RERE. Interacts with SANBR (via the BTB domain). Interacts with SAMSN1. Interacts with SAP30L. Interacts with SETDB1. Interacts with SIN3A. Interacts with SMAD3. Interacts with SMAD4; positively regulated by ZBTB7A. Interacts with SMARCAD1. Interacts with SMARCA4/BRG1. Interacts with SMYD2. Interacts with SMYD4 (via MYND-type zinc finger). Interacts with SP1; the interaction deacetylates SP1 and regulates its transcriptional activity. Interacts with SP3; the interaction deacetylates SP3 and regulates its transcriptional activity. In vitro, C(18) ceramides increase this interaction and the subsequent SP3 deacetylation and SP3-mediated repression of the TERT promoter. Interacts with SPEN/MINT. Interacts with SPHK2. Interacts with SUV39H1. Interacts with TGIF. Interacts with TGIF2. Interacts with TRAF6. Interacts with TRIM28; the interaction recruits HDAC1 to E2F1 and inhibits its acetylation. Interacts with TSC22D3 isoform 1; this interaction affects HDAC1 activity on MYOG promoter and thus inhibits MYOD1 transcriptional activity. Interacts with UHRF1. Interacts with UHRF2. Interacts with ZBTB7A. Interacts with ZMYND8. Interacts with ZMYND15. Interacts with ZNF431. Interacts with ZNF516; this interaction is enhanced in the presence of PWWP2B. Interacts with ZNF541. Interacts with ZNF638. Interacts with ZNHIT1. Interacts with the non-histone region of MACROH2A1. Identified in a complex with HDAC2, KCTD19, DNTTIP1 and ZNF541. Interacts with VRK1. In terms of assembly, (Microbial infection) Interacts with SV40 large T antigen. The cofactor is Zn(2+). In terms of processing, sumoylated on Lys-444 and Lys-476; which promotes enzymatic activity. Desumoylated by SENP1. Post-translationally, phosphorylation on Ser-421 and Ser-423 promotes enzymatic activity and interactions with NuRD and SIN3 complexes. Phosphorylated by CDK5. Ubiquitinated by CHFR, leading to its degradation by the proteasome. Ubiquitinated by KCTD11, leading to proteasomal degradation. Ubiquitous, with higher levels in heart, pancreas and testis, and lower levels in kidney and brain.

The protein resides in the nucleus. The enzyme catalyses N(6)-acetyl-L-lysyl-[histone] + H2O = L-lysyl-[histone] + acetate. The catalysed reaction is N(6)-acetyl-L-lysyl-[protein] + H2O = L-lysyl-[protein] + acetate. It catalyses the reaction N(6)-(2E)-butenoyl-L-lysyl-[protein] + H2O = (2E)-2-butenoate + L-lysyl-[protein]. It carries out the reaction N(6)-[(S)-lactoyl]-L-lysyl-[protein] + H2O = (S)-lactate + L-lysyl-[protein]. Inositol tetraphosphate (1D-myo-inositol 1,4,5,6-tetrakisphosphate) may act as an intermolecular glue between HDAC1 and N-Cor repressor complex components. Histone deacetylase that catalyzes the deacetylation of lysine residues on the N-terminal part of the core histones (H2A, H2B, H3 and H4). Histone deacetylation gives a tag for epigenetic repression and plays an important role in transcriptional regulation, cell cycle progression and developmental events. Histone deacetylases act via the formation of large multiprotein complexes. Acts as a component of the histone deacetylase NuRD complex which participates in the remodeling of chromatin. As part of the SIN3B complex is recruited downstream of the constitutively active genes transcriptional start sites through interaction with histones and mitigates histone acetylation and RNA polymerase II progression within transcribed regions contributing to the regulation of transcription. Also functions as a deacetylase for non-histone targets, such as NR1D2, RELA, SP1, SP3, STAT3 and TSHZ3. Deacetylates SP proteins, SP1 and SP3, and regulates their function. Component of the BRG1-RB1-HDAC1 complex, which negatively regulates the CREST-mediated transcription in resting neurons. Upon calcium stimulation, HDAC1 is released from the complex and CREBBP is recruited, which facilitates transcriptional activation. Deacetylates TSHZ3 and regulates its transcriptional repressor activity. Deacetylates 'Lys-310' in RELA and thereby inhibits the transcriptional activity of NF-kappa-B. Deacetylates NR1D2 and abrogates the effect of KAT5-mediated relieving of NR1D2 transcription repression activity. Component of a RCOR/GFI/KDM1A/HDAC complex that suppresses, via histone deacetylase (HDAC) recruitment, a number of genes implicated in multilineage blood cell development. Involved in CIART-mediated transcriptional repression of the circadian transcriptional activator: CLOCK-BMAL1 heterodimer. Required for the transcriptional repression of circadian target genes, such as PER1, mediated by the large PER complex or CRY1 through histone deacetylation. In addition to protein deacetylase activity, also has protein-lysine deacylase activity: acts as a protein decrotonylase and delactylase by mediating decrotonylation ((2E)-butenoyl) and delactylation (lactoyl) of histones, respectively. The polypeptide is Histone deacetylase 1 (Homo sapiens (Human)).